We begin with the raw amino-acid sequence, 315 residues long: MIKIIIGYVLDLIIGDPNNPYHPIRYIGKLASNMEKLWRKVFKKNLKIAGFFAWLFIVFITFGVTLGIVHIANKINPILGTVVSGILIYFCISAKGLKVEGLKVIKILKEGDIVKARKQLSYIVGRDTENLDEEAIVRAVVETVAENMSDGIIAPLFFAGIGGAPLAFLYKAVNTCDSMFGYKNEKYKDFGFFSAKLDDVFNYIPARLTAYLIVISSFILRLNCKNIFKIYKRDRYNHSSPNSAHPEAAVAGALGIRLGGANYYFGKLVEKPTIGDAKKKIEISDVYKTNNILGMVSFLGMVVALIIRCILEVII.

5 helical membrane-spanning segments follow: residues 48 to 68 (IAGF…TLGI), 77 to 97 (PILG…AKGL), 150 to 170 (DGII…AFLY), 200 to 220 (VFNY…SFIL), and 295 to 315 (MVSF…EVII).

Belongs to the CobD/CbiB family.

Its subcellular location is the cell membrane. It functions in the pathway cofactor biosynthesis; adenosylcobalamin biosynthesis. Its function is as follows. Converts cobyric acid to cobinamide by the addition of aminopropanol on the F carboxylic group. The chain is Cobalamin biosynthesis protein CobD from Clostridium perfringens (strain 13 / Type A).